The sequence spans 408 residues: Argininosuccinate synthase (408 aa).

ATP-binding positions include 10–18 (AYSGGLDTS) and alanine 37. Residues tyrosine 90 and serine 95 each coordinate L-citrulline. An ATP-binding site is contributed by glycine 120. L-aspartate-binding residues include threonine 122, asparagine 126, and aspartate 127. Asparagine 126 is a binding site for L-citrulline. L-citrulline is bound by residues arginine 130, serine 181, serine 190, glutamate 266, and tyrosine 278.

Belongs to the argininosuccinate synthase family. Type 1 subfamily. Homotetramer.

The protein resides in the cytoplasm. It catalyses the reaction L-citrulline + L-aspartate + ATP = 2-(N(omega)-L-arginino)succinate + AMP + diphosphate + H(+). The protein operates within amino-acid biosynthesis; L-arginine biosynthesis; L-arginine from L-ornithine and carbamoyl phosphate: step 2/3. The sequence is that of Argininosuccinate synthase from Laribacter hongkongensis (strain HLHK9).